A 189-amino-acid chain; its full sequence is Ras-like protein 1 (189 aa).

Residue 10–17 (GAGGVGKS) participates in GTP binding. Residues 32–40 (YDPTIEDSY) carry the Effector region motif. Residues 57-61 (DTAGQ) and 116-119 (NKCD) each bind GTP. Cys186 is modified (cysteine methyl ester). Cys186 carries S-geranylgeranyl cysteine lipidation. Residues 187–189 (KML) constitute a propeptide, removed in mature form.

This sequence belongs to the small GTPase superfamily. Ras family.

Its subcellular location is the cell membrane. It catalyses the reaction GTP + H2O = GDP + phosphate + H(+). Alternates between an inactive form bound to GDP and an active form bound to GTP. Activated by a guanine nucleotide-exchange factor (GEF) and inactivated by a GTPase-activating protein (GAP). In terms of biological role, ras proteins bind GDP/GTP and possess intrinsic GTPase activity. Plays a role in eye development by regulating cell growth, survival of postmitotic ommatidial cells and differentiation of photoreceptor cells. During larval development, mediates Ptth/tor signaling leading to the production of ecdysone, a hormone required for the initiation of metamorphosis. This Drosophila willistoni (Fruit fly) protein is Ras-like protein 1.